A 100-amino-acid chain; its full sequence is Small ribosomal subunit protein uS14c (100 aa).

Belongs to the universal ribosomal protein uS14 family. Part of the 30S ribosomal subunit.

Its subcellular location is the plastid. The protein localises to the cyanelle. In terms of biological role, binds 16S rRNA, required for the assembly of 30S particles. This Cyanophora paradoxa protein is Small ribosomal subunit protein uS14c.